The chain runs to 391 residues: Acetyl-CoA acetyltransferase (391 aa).

The active-site Acyl-thioester intermediate is the C88. Catalysis depends on proton acceptor residues H347 and C377.

The protein belongs to the thiolase-like superfamily. Thiolase family. As to quaternary structure, homotetramer.

Its subcellular location is the cytoplasm. The catalysed reaction is 2 acetyl-CoA = acetoacetyl-CoA + CoA. The protein operates within metabolic intermediate biosynthesis; (R)-mevalonate biosynthesis; (R)-mevalonate from acetyl-CoA: step 1/3. This chain is Acetyl-CoA acetyltransferase (phaA), found in Paracoccus denitrificans.